Here is a 568-residue protein sequence, read N- to C-terminus: 2-succinyl-5-enolpyruvyl-6-hydroxy-3-cyclohexene-1-carboxylate synthase (568 aa).

The protein belongs to the TPP enzyme family. MenD subfamily. In terms of assembly, homodimer. The cofactor is Mg(2+). Mn(2+) serves as cofactor. It depends on thiamine diphosphate as a cofactor.

It catalyses the reaction isochorismate + 2-oxoglutarate + H(+) = 5-enolpyruvoyl-6-hydroxy-2-succinyl-cyclohex-3-ene-1-carboxylate + CO2. Its pathway is quinol/quinone metabolism; 1,4-dihydroxy-2-naphthoate biosynthesis; 1,4-dihydroxy-2-naphthoate from chorismate: step 2/7. The protein operates within quinol/quinone metabolism; menaquinone biosynthesis. Functionally, catalyzes the thiamine diphosphate-dependent decarboxylation of 2-oxoglutarate and the subsequent addition of the resulting succinic semialdehyde-thiamine pyrophosphate anion to isochorismate to yield 2-succinyl-5-enolpyruvyl-6-hydroxy-3-cyclohexene-1-carboxylate (SEPHCHC). The sequence is that of 2-succinyl-5-enolpyruvyl-6-hydroxy-3-cyclohexene-1-carboxylate synthase from Actinobacillus pleuropneumoniae serotype 3 (strain JL03).